Consider the following 614-residue polypeptide: 1-deoxy-D-xylulose-5-phosphate synthase (614 aa).

Residues His-74 and 115 to 117 (AHS) each bind thiamine diphosphate. Asp-146 is a binding site for Mg(2+). Residues 147–148 (GA), Asn-175, Tyr-282, and Glu-363 each bind thiamine diphosphate. Asn-175 provides a ligand contact to Mg(2+).

Belongs to the transketolase family. DXPS subfamily. As to quaternary structure, homodimer. The cofactor is Mg(2+). Thiamine diphosphate serves as cofactor.

The enzyme catalyses D-glyceraldehyde 3-phosphate + pyruvate + H(+) = 1-deoxy-D-xylulose 5-phosphate + CO2. Its pathway is metabolic intermediate biosynthesis; 1-deoxy-D-xylulose 5-phosphate biosynthesis; 1-deoxy-D-xylulose 5-phosphate from D-glyceraldehyde 3-phosphate and pyruvate: step 1/1. In terms of biological role, catalyzes the acyloin condensation reaction between C atoms 2 and 3 of pyruvate and glyceraldehyde 3-phosphate to yield 1-deoxy-D-xylulose-5-phosphate (DXP). This is 1-deoxy-D-xylulose-5-phosphate synthase from Nitrosomonas eutropha (strain DSM 101675 / C91 / Nm57).